The sequence spans 211 residues: Troponin I, cardiac muscle (211 aa).

The disordered stretch occupies residues 1–24 (MADESSDAAGEPQPAPAPVRRRSS). N-acetylalanine is present on Ala-2. Residues Ser-5 and Ser-6 each carry the phosphoserine modification. Phosphoserine; by PKA and PKD/PRKD1 is present on residues Ser-23 and Ser-24. Tyr-27 carries the post-translational modification Phosphotyrosine. Phosphothreonine; by STK4/MST1 is present on Thr-32. The involved in binding TNC stretch occupies residues 33–80 (EPHAKKKSKISASRKLQLKTLMLQIAKQEMEREAEERRGEKGRVLRTR). Phosphoserine; by PKC/PRKCE is present on residues Ser-43 and Ser-45. At Thr-52 the chain carries Phosphothreonine; by STK4/MST1. Thr-79 bears the Phosphothreonine mark. Residues Thr-130 and Thr-144 each carry the phosphothreonine; by STK4/MST1 modification. Residues 130-151 (TQKIYDLRGKFKRPTLRRVRIS) form an involved in binding TNC and actin region. Ser-151, Ser-167, and Ser-200 each carry phosphoserine.

The protein belongs to the troponin I family. Interacts with TRIM63. Binds to actin and tropomyosin. Interacts with STK4/MST1. Post-translationally, phosphorylated at Ser-23 and Ser-24 by PRKD1; phosphorylation reduces myofilament calcium sensitivity. Phosphorylated preferentially at Thr-32. Phosphorylation by STK4/MST1 alters its binding affinity to TNNC1 (cardiac Tn-C) and TNNT2 (cardiac Tn-T). Phosphorylated at Ser-43 and Ser-45 by PRKCE; phosphorylation increases myocardium contractile dysfunction.

Its function is as follows. Troponin I is the inhibitory subunit of troponin, the thin filament regulatory complex which confers calcium-sensitivity to striated muscle actomyosin ATPase activity. This Mus musculus (Mouse) protein is Troponin I, cardiac muscle (Tnni3).